A 1014-amino-acid polypeptide reads, in one-letter code: C2 domain-containing protein 5 (1014 aa).

The region spanning 1–109 is the C2 domain; the sequence is MPGKLKVKIV…EAATVISGWF (109 aa). D19, D26, D76, D78, S81, and D84 together coordinate Ca(2+). 4 disordered regions span residues 274–328, 639–669, 801–878, and 992–1014; these read LNPN…GRDG, ETVG…AELD, ALQV…HRGG, and EAGP…DSAT. A compositionally biased stretch (polar residues) spans 275 to 292; that stretch reads NPNTHSSGPSTPLKNQTY. Positions 293 to 318 are enriched in low complexity; the sequence is SFSPSKSFSRQSSSSDTDLSLTPKTG. The span at 319 to 328 shows a compositional bias: gly residues; sequence MGSGSAGRDG. The span at 830-840 shows a compositional bias: polar residues; the sequence is SSDSPGPSTFS. Over residues 993–1006 the composition is skewed to low complexity; it reads AGPGQPTAPGPQSA.

Requires Ca(2+) as cofactor.

Its subcellular location is the cytoplasmic vesicle membrane. It is found in the cytoplasm. The protein localises to the cell cortex. It localises to the cell membrane. The protein resides in the cell projection. Its subcellular location is the ruffle. Functionally, may be required for insulin-stimulated glucose transport and glucose transporter SLC2A4/GLUT4 translocation from intracellular glucose storage vesicle (GSV) to the plasma membrane (PM) in adipocytes. May bind phospholipid membranes in a calcium-dependent manner. This chain is C2 domain-containing protein 5 (c2cd5), found in Xenopus tropicalis (Western clawed frog).